A 788-amino-acid polypeptide reads, in one-letter code: MKDKSIKVLEFNKIQEILKNYTCTKAAKDIIEDLKPYDSMYEVREHLEETKEAFKLLITKGAPPFEGVYDIRSGISLAEKGSALLPGQLLKIAAVLRCARRFKEYINHKEEEESYRVLENICEGIFSLPKIEEEIFNAIEGEDEIADRASSTLYNIRRSLKEKNYSVRDKINSLVRSYSSYLQENIYTVRGDRYVLPVKAEHKGAVPGLVHDQSSTGATLFIEPMSLVNLNNEIKELMLKEKAEIERILTVLSAKINANITGVKTDANIVWELDFIFAKAKFASEYNCTCPTINDEGIVDIIEGRHPLIDRREVVPISVKLGEEFTSLMITGPNTGGKTVTLKTVGLIHLMAMSGLMIPARENSVISYFNNVFADIGDEQSIEQSLSTFSSHMKNIVEIMDKADENSLVLFDELGAGTDPTEGAALAISILENLRKRGTKIIATTHYSELKAYALRKEGVENASVEFDVETLRPTYRLLIGIPGKSNAFEISKRLGLPDYIIDFARENISNENIRFEELIENLQEKSIKAEEDARLAENLKLERDKEKKKYEEKLEGLQKVRDNALIDARREAKNIIKEAKEEADKILKDIRQLERMGYSSDARRKLEEERKKLKDKLDSIEEKEIKTVHEGEALKNVKEGDEVLLASINQKVIVLSKPDNKGDVLVQAGIMKITANIKDLRAAKGSNSNNSSSKIKKSKKLNLNLRRVESSVDLRGMDAEEAIYTVDKYLDEAYLGGLGEVTIVHGKGTGVLRKTIMDMLKGHSHVKKYRLGEYGEGGTGVTVVELK.

Residue 332-339 coordinates ATP; it reads GPNTGGKT. The Smr domain maps to 713–788; the sequence is VDLRGMDAEE…GTGVTVVELK (76 aa).

Belongs to the DNA mismatch repair MutS family. MutS2 subfamily. Homodimer. Binds to stalled ribosomes, contacting rRNA.

In terms of biological role, endonuclease that is involved in the suppression of homologous recombination and thus may have a key role in the control of bacterial genetic diversity. Acts as a ribosome collision sensor, splitting the ribosome into its 2 subunits. Detects stalled/collided 70S ribosomes which it binds and splits by an ATP-hydrolysis driven conformational change. Acts upstream of the ribosome quality control system (RQC), a ribosome-associated complex that mediates the extraction of incompletely synthesized nascent chains from stalled ribosomes and their subsequent degradation. Probably generates substrates for RQC. In Clostridium botulinum (strain Kyoto / Type A2), this protein is Endonuclease MutS2.